A 111-amino-acid chain; its full sequence is PCNA-associated factor (111 aa).

The segment covering 1–10 has biased composition (polar residues); sequence MVRTKANSVP. The interval 1–111 is disordered; that stretch reads MVRTKANSVP…PPDHTDDEKE (111 aa). A Phosphoserine modification is found at S8. A Glycyl lysine isopeptide (Lys-Gly) (interchain with G-Cter in ubiquitin) cross-link involves residue K15. Residues 23–34 carry the D-box motif; sequence RKVLGSSTSAAN. An N6-acetyllysine; alternate modification is found at K24. K24 is covalently cross-linked (Glycyl lysine isopeptide (Lys-Gly) (interchain with G-Cter in ubiquitin); alternate). Over residues 27–39 the composition is skewed to polar residues; the sequence is GSSTSAANSTPLS. S28, S31, and S72 each carry phosphoserine. The PIP-box signature appears at 62–72; the sequence is QKGIGEFFSLS. Over residues 74-84 the composition is skewed to basic and acidic residues; it reads KDSEKENRIPE. The KEN box motif lies at 78–80; the sequence is KEN. Residues 85–97 carry the Initiation motif motif; that stretch reads EAGSSGLGKAKRK.

In terms of assembly, interacts (when monoubiquitinated at Lys-15 and Lys-24) with PCNA. Interacts with isoform 2/p33ING1b of ING1. Interacts with BRCA1. In terms of processing, monoubiquitinated at Lys-15 and Lys-24 during normal S phase, promoting its association with PCNA. Also diubiquitinated at these 2 sites. Following DNA damage, monoubiquitin chains at Lys-15 and Lys-24 are probably extended, leading to disrupt the interaction with PCNA. Polyubiquitinated by the APC/C complex at the mitotic exit, leading to its degradation by the proteasome.

Its subcellular location is the nucleus. The protein resides in the cytoplasm. It localises to the perinuclear region. In terms of biological role, PCNA-binding protein that acts as a regulator of DNA repair during DNA replication. Following DNA damage, the interaction with PCNA is disrupted, facilitating the interaction between monoubiquitinated PCNA and the translesion DNA synthesis DNA polymerase eta (POLH) at stalled replisomes, facilitating the bypass of replication-fork-blocking lesions. Also acts as a regulator of centrosome number. This Bos taurus (Bovine) protein is PCNA-associated factor.